The primary structure comprises 533 residues: Flavin-containing monooxygenase 5 (533 aa).

At R5 the chain carries Dimethylated arginine. FAD-binding positions include 10-14, E33, and 41-42; these read GGGVS and LW. S54 carries the post-translational modification Phosphoserine. Y56 is subject to Phosphotyrosine. S58 carries the post-translational modification Phosphoserine. Residue 62–63 coordinates FAD; the sequence is NT. Residue 196-199 participates in NADP(+) binding; it reads SGGD. S280 is modified (phosphoserine). T284 carries the phosphothreonine modification. S401 is subject to Phosphoserine. A helical transmembrane segment spans residues 510 to 530; the sequence is MVSAVTTGCFMLAVVFFAIIM.

This sequence belongs to the FMO family. FAD serves as cofactor. Expressed in liver.

It is found in the microsome membrane. Its subcellular location is the endoplasmic reticulum membrane. The catalysed reaction is N,N-dimethylaniline + NADPH + O2 + H(+) = N,N-dimethylaniline N-oxide + NADP(+) + H2O. The enzyme catalyses NADPH + O2 + H(+) = H2O2 + NADP(+). It carries out the reaction heptan-2-one + NADPH + O2 + H(+) = pentyl acetate + NADP(+) + H2O. It catalyses the reaction octan-3-one + NADPH + O2 + H(+) = pentyl propanoate + NADP(+) + H2O. The catalysed reaction is octan-3-one + NADPH + O2 + H(+) = ethyl hexanoate + NADP(+) + H2O. The enzyme catalyses hexan-3-one + NADPH + O2 + H(+) = ethyl butanoate + NADP(+) + H2O. It carries out the reaction hexan-3-one + NADPH + O2 + H(+) = propyl propanoate + NADP(+) + H2O. It catalyses the reaction heptan-4-one + NADPH + O2 + H(+) = propyl butanoate + NADP(+) + H2O. The catalysed reaction is (2E)-geranial + NADPH + O2 + H(+) = (1E)-2,6-dimethylhepta-1,5-dien-1-yl formate + NADP(+) + H2O. The enzyme catalyses sulcatone + NADPH + O2 + H(+) = 4-methylpent-3-en-1-yl acetate + NADP(+) + H2O. Acts as a Baeyer-Villiger monooxygenase on a broad range of substrates. Catalyzes the insertion of an oxygen atom into a carbon-carbon bond adjacent to a carbonyl, which converts ketones to esters. Active on diverse carbonyl compounds, whereas soft nucleophiles are mostly non- or poorly reactive. In contrast with other forms of FMO it is non- or poorly active on 'classical' substrates such as drugs, pesticides, and dietary components containing soft nucleophilic heteroatoms. Able to oxidize drug molecules bearing a carbonyl group on an aliphatic chain, such as nabumetone and pentoxifylline. Also, in the absence of substrates, shows slow but yet significant NADPH oxidase activity. Acts as a positive modulator of cholesterol biosynthesis as well as glucose homeostasis, promoting metabolic aging via pleiotropic effects. This is Flavin-containing monooxygenase 5 (FMO5) from Cavia porcellus (Guinea pig).